A 282-amino-acid chain; its full sequence is Heat stress transcription factor A-6a (282 aa).

A DNA-binding region spans residues 17-111; it reads PTAFLTKTYN…LLKNIKRRKT (95 aa). The hydrophobic repeat HR-A/B stretch occupies residues 111 to 177; that stretch reads TSSQTQTQSL…MMMNFLLKKI (67 aa). Positions 175-190 match the Bipartite nuclear localization signal motif; it reads KKIKKPSFLQSLRKRN. An AHA motif is present at residues 261–270; it reads EGIWKGFVLS.

It belongs to the HSF family. Class A subfamily. As to quaternary structure, homotrimer. Exhibits temperature-dependent phosphorylation.

The protein resides in the nucleus. Functionally, transcriptional activator that specifically binds DNA sequence 5'-AGAAnnTTCT-3' known as heat shock promoter elements (HSE). The sequence is that of Heat stress transcription factor A-6a (HSFA6A) from Arabidopsis thaliana (Mouse-ear cress).